Here is a 452-residue protein sequence, read N- to C-terminus: Deoxybrevianamide E synthase notF (452 aa).

Positions 1-19 (MTAPELRVDTFRAPEDAPK) are enriched in basic and acidic residues. The interval 1–38 (MTAPELRVDTFRAPEDAPKEPSAQQPRLPSSPSPAQAL) is disordered. Residues 21-38 (PSAQQPRLPSSPSPAQAL) are compositionally biased toward low complexity. E108 contributes to the brevianamide F binding site. Residues R122, K212, Y214, K282, Y284, Y371, Y436, and Y440 each contribute to the dimethylallyl diphosphate site.

Belongs to the tryptophan dimethylallyltransferase family. In terms of assembly, monomer.

The enzyme catalyses brevianamide F + dimethylallyl diphosphate = deoxybrevianamide E + diphosphate. It participates in alkaloid biosynthesis. With respect to regulation, addition of 5 mM Mg(2+), Ca(2+) or Mn(2+) slightly enhances catalysis (about 100-120%). Significant reduction of enzyme activity (2%-35%) is observed with Cu(2+), Zn(2+), Fe(2+), or Sn(2+) (5 mM). In terms of biological role, deoxybrevianamide E synthase; part of the gene cluster that mediates the biosynthesis of notoamide, a fungal indole alkaloid that belongs to a family of natural products containing a characteristic bicyclo[2.2.2]diazaoctane core. The first step of notoamide biosynthesis involves coupling of L-proline and L-tryptophan by the bimodular NRPS notE, to produce cyclo-L-tryptophan-L-proline called brevianamide F. The reverse prenyltransferase notF then acts as a deoxybrevianamide E synthase and converts brevianamide F to deoxybrevianamide E via reverse prenylation at C-2 of the indole ring leading to the bicyclo[2.2.2]diazaoctane core. Deoxybrevianamide E is further hydroxylated at C-6 of the indole ring, likely catalyzed by the cytochrome P450 monooxygenase notG, to yield 6-hydroxy-deoxybrevianamide E. 6-hydroxy-deoxybrevianamide E is a specific substrate of the prenyltransferase notC for normal prenylation at C-7 to produce 6-hydroxy-7-prenyl-deoxybrevianamide, also called notoamide S. As the proposed pivotal branching point in notoamide biosynthesis, notoamide S can be diverted to notoamide E through an oxidative pyran ring closure putatively catalyzed by either notH cytochrome P450 monooxygenase or the notD FAD-linked oxidoreductase. This step would be followed by an indole 2,3-epoxidation-initiated pinacol-like rearrangement catalyzed by the notB FAD-dependent monooxygenase leading to the formation of notoamide C and notoamide D. On the other hand notoamide S is converted to notoamide T by notH (or notD), a bifunctional oxidase that also functions as the intramolecular Diels-Alderase responsible for generation of (+)-notoamide T. To generate antipodal (-)-notoaminide T, notH' (or notD') in Aspergillus versicolor is expected to catalyze a Diels-Alder reaction leading to the opposite stereochemistry. The remaining oxidoreductase notD (or notH) likely catalyzes the oxidative pyran ring formation to yield (+)-stephacidin A. The FAD-dependent monooxygenase notI is highly similar to notB and is predicted to catalyze a similar conversion from (+)-stephacidin A to (-)-notoamide B via the 2,3-epoxidation of (+)-stephacidin A followed by a pinacol-type rearrangement. Finally, it remains unclear which enzyme could be responsible for the final hydroxylation steps leading to notoamide A and sclerotiamide. The sequence is that of Deoxybrevianamide E synthase notF from Aspergillus sp. (strain MF297-2).